We begin with the raw amino-acid sequence, 72 residues long: Lantibiotic Flvbeta.g (72 aa).

Residues 1–34 (MNNNNFDMEKFKKLAAIVSEGEIDEMLDETTVGA) constitute a propeptide, cleaved by FlvT. Positions 36-40 (STLPC) form a cross-link, lanthionine (Ser-Cys); by FlvM2. Thr37, Thr46, and Thr48 each carry 2,3-didehydrobutyrine; by FlvM2. 3 consecutive cross-links (beta-methyllanthionine (Thr-Cys); by FlvM2) follow at residues 55–61 (TTGFDWC), 63–66 (TGAC), and 67–70 (THSC).

Post-translationally, contains LL-lanthionine and DL-beta-methyllanthionine, when coepressed in E.coli with the flavecin synthetase FlvM2.

The protein localises to the secreted. Its function is as follows. Lanthionine-containing peptide antibiotic (lantibiotic) that is probably weakly active on Gram-positive bacteria, since its analog [Del1]Flvbeta.g shows weak antibacterial activity against M.luteus. This activity is synergistically enhanced by [Del2]Flvalpha.a, an analog of Flvalpha.a, which is encoded by the same operon than Flvbeta.g. The bactericidal activity of lantibiotics is based on depolarization of energized bacterial cytoplasmic membranes, initiated by the formation of aqueous transmembrane pores. This Ruminococcus flavefaciens protein is Lantibiotic Flvbeta.g.